Consider the following 234-residue polypeptide: LexA repressor (234 aa).

The H-T-H motif DNA-binding region spans 41–61 (RAEIAAELGFRSPNAAEEHLK). Residues S152 and K189 each act as for autocatalytic cleavage activity in the active site.

Belongs to the peptidase S24 family. As to quaternary structure, homodimer.

It catalyses the reaction Hydrolysis of Ala-|-Gly bond in repressor LexA.. Its function is as follows. Represses a number of genes involved in the response to DNA damage (SOS response), including recA and lexA. In the presence of single-stranded DNA, RecA interacts with LexA causing an autocatalytic cleavage which disrupts the DNA-binding part of LexA, leading to derepression of the SOS regulon and eventually DNA repair. This is LexA repressor from Polaromonas naphthalenivorans (strain CJ2).